The following is a 118-amino-acid chain: Holo-[acyl-carrier-protein] synthase (118 aa).

Mg(2+) is bound by residues Asp8 and Glu58.

The protein belongs to the P-Pant transferase superfamily. AcpS family. The cofactor is Mg(2+).

It is found in the cytoplasm. It catalyses the reaction apo-[ACP] + CoA = holo-[ACP] + adenosine 3',5'-bisphosphate + H(+). Its function is as follows. Transfers the 4'-phosphopantetheine moiety from coenzyme A to a Ser of acyl-carrier-protein. This is Holo-[acyl-carrier-protein] synthase from Streptococcus pyogenes serotype M12 (strain MGAS2096).